The chain runs to 711 residues: Tyrosine-protein phosphatase 2 (711 aa).

Positions 21-130 constitute a Rhodanese domain; sequence TESVSWIIDL…FASSHPDAIV (110 aa). Disordered stretches follow at residues 275-306 and 329-376; these read APQQ…SRVR and IIPR…RANK. 2 stretches are compositionally biased toward polar residues: residues 290–306 and 340–363; these read SYPS…SRVR and NAQN…SNTR. The region spanning 433–698 is the Tyrosine-protein phosphatase domain; that stretch reads EMTRSLAFND…KFLYDVVDYL (266 aa). Cys-630 (phosphocysteine intermediate) is an active-site residue.

This sequence belongs to the protein-tyrosine phosphatase family. Non-receptor class subfamily.

The protein resides in the cytoplasm. It carries out the reaction O-phospho-L-tyrosyl-[protein] + H2O = L-tyrosyl-[protein] + phosphate. Its function is as follows. Plays a role in inhibiting the onset of mitosis. Dephosphorylates sty1/spc1 and wis1/spc2/sty2. The sequence is that of Tyrosine-protein phosphatase 2 (pyp2) from Schizosaccharomyces pombe (strain 972 / ATCC 24843) (Fission yeast).